The chain runs to 326 residues: tRNA U34 carboxymethyltransferase (326 aa).

7 residues coordinate carboxy-S-adenosyl-L-methionine: Lys91, Trp105, Lys110, Gly130, Met196, Tyr200, and Arg315.

This sequence belongs to the class I-like SAM-binding methyltransferase superfamily. CmoB family. Homotetramer.

The enzyme catalyses carboxy-S-adenosyl-L-methionine + 5-hydroxyuridine(34) in tRNA = 5-carboxymethoxyuridine(34) in tRNA + S-adenosyl-L-homocysteine + H(+). Catalyzes carboxymethyl transfer from carboxy-S-adenosyl-L-methionine (Cx-SAM) to 5-hydroxyuridine (ho5U) to form 5-carboxymethoxyuridine (cmo5U) at position 34 in tRNAs. In Tolumonas auensis (strain DSM 9187 / NBRC 110442 / TA 4), this protein is tRNA U34 carboxymethyltransferase.